We begin with the raw amino-acid sequence, 306 residues long: Protein translocase subunit SecF (306 aa).

6 consecutive transmembrane segments (helical) span residues 17–37 (AFAV…TKGI), 134–154 (GLGM…RFQW), 158–178 (LGAI…LSFF), 185–205 (TVLA…IVIF), 232–254 (LLRT…FFGG), and 268–288 (VMAG…WLNL).

Belongs to the SecD/SecF family. SecF subfamily. In terms of assembly, forms a complex with SecD. Part of the essential Sec protein translocation apparatus which comprises SecA, SecYEG and auxiliary proteins SecDF-YajC and YidC.

Its subcellular location is the cell inner membrane. Functionally, part of the Sec protein translocase complex. Interacts with the SecYEG preprotein conducting channel. SecDF uses the proton motive force (PMF) to complete protein translocation after the ATP-dependent function of SecA. This chain is Protein translocase subunit SecF, found in Pseudomonas aeruginosa (strain ATCC 15692 / DSM 22644 / CIP 104116 / JCM 14847 / LMG 12228 / 1C / PRS 101 / PAO1).